The chain runs to 426 residues: Gamma-glutamyl phosphate reductase (426 aa).

This sequence belongs to the gamma-glutamyl phosphate reductase family.

Its subcellular location is the cytoplasm. The catalysed reaction is L-glutamate 5-semialdehyde + phosphate + NADP(+) = L-glutamyl 5-phosphate + NADPH + H(+). It functions in the pathway amino-acid biosynthesis; L-proline biosynthesis; L-glutamate 5-semialdehyde from L-glutamate: step 2/2. Catalyzes the NADPH-dependent reduction of L-glutamate 5-phosphate into L-glutamate 5-semialdehyde and phosphate. The product spontaneously undergoes cyclization to form 1-pyrroline-5-carboxylate. This chain is Gamma-glutamyl phosphate reductase, found in Ralstonia pickettii (strain 12J).